A 656-amino-acid polypeptide reads, in one-letter code: Macrolide export ATP-binding/permease protein MacB (656 aa).

The ABC transporter domain occupies 20–258 (IELAGITRSF…EPDFAPHVDR (239 aa)). 56 to 63 (GASGSGKS) is an ATP binding site. The next 4 helical transmembrane spans lie at 284 to 304 (ALTL…LAIG), 531 to 551 (LTIL…IGVM), 591 to 611 (ALGG…IALF), and 619 to 639 (LLPV…FGYL).

This sequence belongs to the ABC transporter superfamily. Macrolide exporter (TC 3.A.1.122) family. As to quaternary structure, homodimer.

It localises to the cell inner membrane. Non-canonical ABC transporter that contains transmembrane domains (TMD), which form a pore in the inner membrane, and an ATP-binding domain (NBD), which is responsible for energy generation. Confers resistance against macrolides. The sequence is that of Macrolide export ATP-binding/permease protein MacB from Azoarcus sp. (strain BH72).